Reading from the N-terminus, the 861-residue chain is Importin subunit beta-1 (861 aa).

N-acetylserine is present on Ser2. 19 HEAT repeats span residues 3-35 (TAEF…LSND), 37-66 (FLQF…LTLK), 90-129 (PEAK…ELPH), 134-164 (ELMK…YMCE), 177-208 (SNNI…LADS), 219-255 (EGER…MSLY), 260-306 (KPYM…ELAQ), 317-362 (FALS…AQNC), 367-395 (LEPV…AFGS), 402-442 (KVQR…ADSV), 452-484 (LPGV…VEQL), 496-530 (YPAL…MVEY), 536-586 (AETS…VIRK), 592-629 (EPVA…AASL), 634-669 (EKYL…ISNS), 675-713 (RRYS…ASNI), 718-764 (IPYL…IVAG), 773-812 (FPYV…IAAM), and 819-859 (KQFY…KRQL). Residues 25-106 (SETQLKKLSN…KTNALTALVS (82 aa)) form the Importin N-terminal domain. At Ser836 the chain carries Phosphoserine.

It belongs to the importin beta family. Importin beta-1 subfamily. Forms a complex with the importin alpha subunit (SRP1/KAP60). Interacts with Ran (GSP1); interacts specifically with the GTP-bound form of Ran (GTP-Ran), protecting it from GTP hydrolysis and nucleotide exchange. Interacts with nucleoporin NUP1.

It is found in the cytoplasm. It localises to the nucleus. The protein resides in the nuclear pore complex. In terms of biological role, importin beta subunit that functions in nuclear protein import through association with the importin alpha subunit, which binds to the classical nuclear localization signal (cNLS) in cargo substrates. Docking of the importin/substrate complex to the nuclear pore complex (NPC) is mediated by importin beta through binding to nucleoporin FxFG repeats and the complex is subsequently translocated through the pore by an energy requiring, Ran-dependent mechanism. At the nucleoplasmic side of the NPC, GTP-Ran binds to importin beta and the three components separate, leading to release of the cargo. Importin alpha and beta are re-exported from the nucleus to the cytoplasm where GTP hydrolysis releases Ran from importin beta. The directionality of nuclear import is thought to be conferred by an asymmetric distribution of the GTP- and GDP-bound forms of Ran between the cytoplasm and nucleus. Mediates the nuclear import of histones H2A and H2B. Mediates the nuclear import of transcription factor GCN4. The protein is Importin subunit beta-1 of Saccharomyces cerevisiae (strain ATCC 204508 / S288c) (Baker's yeast).